Here is a 311-residue protein sequence, read N- to C-terminus: Pyrimidine-specific ribonucleoside hydrolase RihA (311 aa).

Residue H240 is part of the active site.

Belongs to the IUNH family. RihA subfamily.

Its function is as follows. Hydrolyzes with equal efficiency cytidine or uridine to ribose and cytosine or uracil, respectively. The protein is Pyrimidine-specific ribonucleoside hydrolase RihA of Escherichia coli O17:K52:H18 (strain UMN026 / ExPEC).